The following is a 270-amino-acid chain: NAD kinase (270 aa).

Asp49 serves as the catalytic Proton acceptor. Residues 49–50 (DG), Arg54, 126–127 (NE), Arg152, Asp154, 165–170 (TAYNKS), Ala189, and Gln227 contribute to the NAD(+) site.

Belongs to the NAD kinase family. A divalent metal cation serves as cofactor.

It localises to the cytoplasm. It carries out the reaction NAD(+) + ATP = ADP + NADP(+) + H(+). Functionally, involved in the regulation of the intracellular balance of NAD and NADP, and is a key enzyme in the biosynthesis of NADP. Catalyzes specifically the phosphorylation on 2'-hydroxyl of the adenosine moiety of NAD to yield NADP. This is NAD kinase from Lactococcus lactis subsp. cremoris (strain MG1363).